The sequence spans 169 residues: Peptide methionine sulfoxide reductase MsrA (169 aa).

Residue C10 is part of the active site.

It belongs to the MsrA Met sulfoxide reductase family.

The catalysed reaction is L-methionyl-[protein] + [thioredoxin]-disulfide + H2O = L-methionyl-(S)-S-oxide-[protein] + [thioredoxin]-dithiol. It carries out the reaction [thioredoxin]-disulfide + L-methionine + H2O = L-methionine (S)-S-oxide + [thioredoxin]-dithiol. Its function is as follows. Has an important function as a repair enzyme for proteins that have been inactivated by oxidation. Catalyzes the reversible oxidation-reduction of methionine sulfoxide in proteins to methionine. This is Peptide methionine sulfoxide reductase MsrA from Streptococcus equi subsp. equi (strain 4047).